A 325-amino-acid chain; its full sequence is Ribonucleoside-diphosphate reductase subunit beta (325 aa).

The Fe cation site is built by D73, E104, and H107. Y111 is a catalytic residue. E164, E198, and H201 together coordinate Fe cation.

Belongs to the ribonucleoside diphosphate reductase small chain family. Tetramer of two alpha and two beta subunits. The cofactor is Fe cation.

It carries out the reaction a 2'-deoxyribonucleoside 5'-diphosphate + [thioredoxin]-disulfide + H2O = a ribonucleoside 5'-diphosphate + [thioredoxin]-dithiol. Provides the precursors necessary for DNA synthesis. Catalyzes the biosynthesis of deoxyribonucleotides from the corresponding ribonucleotides. In Mycobacterium leprae (strain TN), this protein is Ribonucleoside-diphosphate reductase subunit beta (nrdF).